The primary structure comprises 358 residues: Holliday junction branch migration complex subunit RuvB (358 aa).

Positions 1–24 (MSIQTDDFAAPPPKRILSGAPASP) are disordered. The tract at residues 5-194 (TDDFAAPPPK…FGIVARLEFY (190 aa)) is large ATPase domain (RuvB-L). Residues leucine 33, arginine 34, glycine 75, lysine 78, threonine 79, threonine 80, 141–143 (EDY), arginine 184, tyrosine 194, and arginine 231 each bind ATP. Residue threonine 79 participates in Mg(2+) binding. The small ATPAse domain (RuvB-S) stretch occupies residues 195-265 (SPEELASIVR…IAHRALVMLD (71 aa)). The head domain (RuvB-H) stretch occupies residues 268–358 (PQGFDLMDRK…GDMFGAMRPE (91 aa)). DNA is bound by residues arginine 304, arginine 323, and arginine 328.

The protein belongs to the RuvB family. Homohexamer. Forms an RuvA(8)-RuvB(12)-Holliday junction (HJ) complex. HJ DNA is sandwiched between 2 RuvA tetramers; dsDNA enters through RuvA and exits via RuvB. An RuvB hexamer assembles on each DNA strand where it exits the tetramer. Each RuvB hexamer is contacted by two RuvA subunits (via domain III) on 2 adjacent RuvB subunits; this complex drives branch migration. In the full resolvosome a probable DNA-RuvA(4)-RuvB(12)-RuvC(2) complex forms which resolves the HJ.

The protein localises to the cytoplasm. It catalyses the reaction ATP + H2O = ADP + phosphate + H(+). Functionally, the RuvA-RuvB-RuvC complex processes Holliday junction (HJ) DNA during genetic recombination and DNA repair, while the RuvA-RuvB complex plays an important role in the rescue of blocked DNA replication forks via replication fork reversal (RFR). RuvA specifically binds to HJ cruciform DNA, conferring on it an open structure. The RuvB hexamer acts as an ATP-dependent pump, pulling dsDNA into and through the RuvAB complex. RuvB forms 2 homohexamers on either side of HJ DNA bound by 1 or 2 RuvA tetramers; 4 subunits per hexamer contact DNA at a time. Coordinated motions by a converter formed by DNA-disengaged RuvB subunits stimulates ATP hydrolysis and nucleotide exchange. Immobilization of the converter enables RuvB to convert the ATP-contained energy into a lever motion, pulling 2 nucleotides of DNA out of the RuvA tetramer per ATP hydrolyzed, thus driving DNA branch migration. The RuvB motors rotate together with the DNA substrate, which together with the progressing nucleotide cycle form the mechanistic basis for DNA recombination by continuous HJ branch migration. Branch migration allows RuvC to scan DNA until it finds its consensus sequence, where it cleaves and resolves cruciform DNA. The polypeptide is Holliday junction branch migration complex subunit RuvB (Albidiferax ferrireducens (strain ATCC BAA-621 / DSM 15236 / T118) (Rhodoferax ferrireducens)).